The primary structure comprises 475 residues: Aspartyl/glutamyl-tRNA(Asn/Gln) amidotransferase subunit B (475 aa).

The protein belongs to the GatB/GatE family. GatB subfamily. In terms of assembly, heterotrimer of A, B and C subunits.

The enzyme catalyses L-glutamyl-tRNA(Gln) + L-glutamine + ATP + H2O = L-glutaminyl-tRNA(Gln) + L-glutamate + ADP + phosphate + H(+). It carries out the reaction L-aspartyl-tRNA(Asn) + L-glutamine + ATP + H2O = L-asparaginyl-tRNA(Asn) + L-glutamate + ADP + phosphate + 2 H(+). In terms of biological role, allows the formation of correctly charged Asn-tRNA(Asn) or Gln-tRNA(Gln) through the transamidation of misacylated Asp-tRNA(Asn) or Glu-tRNA(Gln) in organisms which lack either or both of asparaginyl-tRNA or glutaminyl-tRNA synthetases. The reaction takes place in the presence of glutamine and ATP through an activated phospho-Asp-tRNA(Asn) or phospho-Glu-tRNA(Gln). This Thermoanaerobacter pseudethanolicus (strain ATCC 33223 / 39E) (Clostridium thermohydrosulfuricum) protein is Aspartyl/glutamyl-tRNA(Asn/Gln) amidotransferase subunit B.